The sequence spans 357 residues: Type II methyltransferase M1.HgaI (357 aa).

The region spanning isoleucine 5–asparagine 357 is the SAM-dependent MTase C5-type domain. Cysteine 83 is an active-site residue.

The protein belongs to the class I-like SAM-binding methyltransferase superfamily. C5-methyltransferase family.

The enzyme catalyses a 2'-deoxycytidine in DNA + S-adenosyl-L-methionine = a 5-methyl-2'-deoxycytidine in DNA + S-adenosyl-L-homocysteine + H(+). Its function is as follows. A methylase that recognizes DNA with the sequence 5'-GCGTC-3', methylates C-2, and protects the DNA from cleavage by the HgaI endonuclease. This Avibacterium volantium (Pasteurella volantium) protein is Type II methyltransferase M1.HgaI (hgaIAM).